The primary structure comprises 703 residues: Polyribonucleotide nucleotidyltransferase (703 aa).

Aspartate 488 and aspartate 494 together coordinate Mg(2+). A KH domain is found at 555–614; that stretch reads PKIVKMQINPDKIKDVIGPGGKIITKIIDETGVKIDIEQTGEVFISGIEIDMIKKAQELI. One can recognise an S1 motif domain in the interval 624–692; the sequence is GKTYKGKVSR…EKGRVNLSRK (69 aa).

The protein belongs to the polyribonucleotide nucleotidyltransferase family. Requires Mg(2+) as cofactor.

It localises to the cytoplasm. The catalysed reaction is RNA(n+1) + phosphate = RNA(n) + a ribonucleoside 5'-diphosphate. In terms of biological role, involved in mRNA degradation. Catalyzes the phosphorolysis of single-stranded polyribonucleotides processively in the 3'- to 5'-direction. This chain is Polyribonucleotide nucleotidyltransferase, found in Clostridioides difficile (strain 630) (Peptoclostridium difficile).